The chain runs to 293 residues: Tyrosine recombinase XerD (293 aa).

The Core-binding (CB) domain maps to 1–83 (MHGLIADFIH…ALRKFYRFLL (83 aa)). Residues 104 to 287 (HLPATLSGTE…SNQHLVAVYH (184 aa)) form the Tyr recombinase domain. Active-site residues include R144, K168, H239, R242, and H265. Y274 acts as the O-(3'-phospho-DNA)-tyrosine intermediate in catalysis.

This sequence belongs to the 'phage' integrase family. XerD subfamily. Forms a cyclic heterotetrameric complex composed of two molecules of XerC and two molecules of XerD.

It localises to the cytoplasm. Site-specific tyrosine recombinase, which acts by catalyzing the cutting and rejoining of the recombining DNA molecules. The XerC-XerD complex is essential to convert dimers of the bacterial chromosome into monomers to permit their segregation at cell division. It also contributes to the segregational stability of plasmids. The protein is Tyrosine recombinase XerD of Lacticaseibacillus casei (Lactobacillus casei).